The sequence spans 98 residues: U10-barytoxin-Tl1a (98 aa).

An N-terminal signal peptide occupies residues 1–21 (MKTLVLVAVLGVASLYLLSSA). Residues 22–50 (SEVQQLSPAEEEFRAFVSTFGGLFETEER) constitute a propeptide that is removed on maturation. 3 disulfide bridges follow: Cys-57–Cys-71, Cys-64–Cys-76, and Cys-70–Cys-89.

This sequence belongs to the neurotoxin 10 (Hwtx-1) family. 27 (ICK-3) subfamily. In terms of tissue distribution, expressed by the venom gland.

Its subcellular location is the secreted. Ion channel inhibitor. The sequence is that of U10-barytoxin-Tl1a from Trittame loki (Brush-footed trapdoor spider).